Here is a 476-residue protein sequence, read N- to C-terminus: ATP synthase subunit beta (476 aa).

Residue 154–161 (GGAGVGKT) participates in ATP binding.

The protein belongs to the ATPase alpha/beta chains family. As to quaternary structure, F-type ATPases have 2 components, CF(1) - the catalytic core - and CF(0) - the membrane proton channel. CF(1) has five subunits: alpha(3), beta(3), gamma(1), delta(1), epsilon(1). CF(0) has four main subunits: a(1), b(1), b'(1) and c(9-12).

The protein resides in the cell inner membrane. It catalyses the reaction ATP + H2O + 4 H(+)(in) = ADP + phosphate + 5 H(+)(out). Produces ATP from ADP in the presence of a proton gradient across the membrane. The catalytic sites are hosted primarily by the beta subunits. The chain is ATP synthase subunit beta from Rhodopseudomonas palustris (strain ATCC BAA-98 / CGA009).